We begin with the raw amino-acid sequence, 449 residues long: Glucose-6-phosphate isomerase (449 aa).

Glutamate 291 functions as the Proton donor in the catalytic mechanism. Active-site residues include histidine 312 and lysine 426.

The protein belongs to the GPI family.

The protein resides in the cytoplasm. The catalysed reaction is alpha-D-glucose 6-phosphate = beta-D-fructose 6-phosphate. It functions in the pathway carbohydrate biosynthesis; gluconeogenesis. Its pathway is carbohydrate degradation; glycolysis; D-glyceraldehyde 3-phosphate and glycerone phosphate from D-glucose: step 2/4. Catalyzes the reversible isomerization of glucose-6-phosphate to fructose-6-phosphate. The protein is Glucose-6-phosphate isomerase of Streptococcus pyogenes serotype M12 (strain MGAS2096).